Reading from the N-terminus, the 378-residue chain is Spermidine/putrescine import ATP-binding protein PotA (378 aa).

Residues 18–248 (VQLAGIRKCF…PKNLFVAGFI (231 aa)) enclose the ABC transporter domain. Position 50–57 (50–57 (GPSGCGKT)) interacts with ATP.

Belongs to the ABC transporter superfamily. Spermidine/putrescine importer (TC 3.A.1.11.1) family. In terms of assembly, the complex is composed of two ATP-binding proteins (PotA), two transmembrane proteins (PotB and PotC) and a solute-binding protein (PotD).

The protein localises to the cell inner membrane. It carries out the reaction ATP + H2O + polyamine-[polyamine-binding protein]Side 1 = ADP + phosphate + polyamineSide 2 + [polyamine-binding protein]Side 1.. Part of the ABC transporter complex PotABCD involved in spermidine/putrescine import. Responsible for energy coupling to the transport system. This chain is Spermidine/putrescine import ATP-binding protein PotA, found in Shigella flexneri.